Reading from the N-terminus, the 331-residue chain is Homoserine O-succinyltransferase (331 aa).

Catalysis depends on Cys-141, which acts as the Acyl-thioester intermediate. Residues Lys-162 and Ser-190 each coordinate substrate. His-233 serves as the catalytic Proton acceptor. Glu-235 is a catalytic residue. Arg-247 contributes to the substrate binding site.

The protein belongs to the MetA family.

It is found in the cytoplasm. The enzyme catalyses L-homoserine + succinyl-CoA = O-succinyl-L-homoserine + CoA. The protein operates within amino-acid biosynthesis; L-methionine biosynthesis via de novo pathway; O-succinyl-L-homoserine from L-homoserine: step 1/1. Functionally, transfers a succinyl group from succinyl-CoA to L-homoserine, forming succinyl-L-homoserine. This Methylorubrum extorquens (strain DSM 6343 / CIP 106787 / DM4) (Methylobacterium extorquens) protein is Homoserine O-succinyltransferase.